Consider the following 514-residue polypeptide: 2,3-bisphosphoglycerate-independent phosphoglycerate mutase (514 aa).

Asp-14 and Ser-64 together coordinate Mn(2+). The Phosphoserine intermediate role is filled by Ser-64. Substrate contacts are provided by residues His-125, 155-156 (RD), Arg-187, Arg-193, 263-266 (RADR), and Lys-336. The Mn(2+) site is built by Asp-403, His-407, Asp-444, His-445, and His-463.

The protein belongs to the BPG-independent phosphoglycerate mutase family. As to quaternary structure, monomer. It depends on Mn(2+) as a cofactor.

It catalyses the reaction (2R)-2-phosphoglycerate = (2R)-3-phosphoglycerate. The protein operates within carbohydrate degradation; glycolysis; pyruvate from D-glyceraldehyde 3-phosphate: step 3/5. In terms of biological role, catalyzes the interconversion of 2-phosphoglycerate and 3-phosphoglycerate. This is 2,3-bisphosphoglycerate-independent phosphoglycerate mutase from Escherichia coli O6:H1 (strain CFT073 / ATCC 700928 / UPEC).